Consider the following 161-residue polypeptide: Ragulator complex protein LAMTOR1 (161 aa).

The interval 1–43 (MGCCYSSENEDSDQDREERKLLLDPSSTPTKALNGAEPNYHSL) is disordered. Residue G2 is the site of N-myristoyl glycine attachment. 2 S-palmitoyl cysteine lipidation sites follow: C3 and C4. K20 participates in a covalent cross-link: Glycyl lysine isopeptide (Lys-Gly) (interchain with G-Cter in ubiquitin). At S27 the chain carries Phosphoserine. At T28 the chain carries Phosphothreonine. A Glycyl lysine isopeptide (Lys-Gly) (interchain with G-Cter in ubiquitin) cross-link involves residue K31. Phosphoserine is present on residues S42 and S56. K60 participates in a covalent cross-link: Glycyl lysine isopeptide (Lys-Gly) (interchain with G-Cter in ubiquitin). S98 bears the Phosphoserine mark. Glycyl lysine isopeptide (Lys-Gly) (interchain with G-Cter in ubiquitin) cross-links involve residues K103 and K104. An interaction with LAMTOR2 and LAMTOR3 region spans residues 121-161 (SEPIPFSDLQQVSRIAAYAYSALSQIRVDAKEELVVQFGIP). Phosphoserine is present on S141.

This sequence belongs to the LAMTOR1 family. As to quaternary structure, part of the Ragulator complex composed of LAMTOR1, LAMTOR2, LAMTOR3, LAMTOR4 and LAMTOR5. LAMTOR4 and LAMTOR5 form a heterodimer that interacts, through LAMTOR1, with a LAMTOR2, LAMTOR3 heterodimer. Interacts with LAMTOR2 and LAMTOR3; the interaction is direct. The Ragulator complex interacts with both the mTORC1 complex and heterodimers constituted of the Rag GTPases RagA/RRAGA, RagB/RRAGB, RagC/RRAGC and RagD/RRAGD; regulated by amino acid availability. The Ragulator complex interacts with SLC38A9; the probable amino acid sensor. Component of the lysosomal folliculin complex (LFC), composed of FLCN, FNIP1 (or FNIP2), RagA/RRAGA or RagB/RRAGB GDP-bound, RagC/RRAGC or RagD/RRAGD GTP-bound, and Ragulator. Associates with the lysosomal V-ATPase complex; interaction promotes the guanine nucleotide exchange factor (GEF) of the Ragulator complex. Interacts with MMP14. Interacts with CDKN1B; prevents the interaction of CDKN1B with RHOA leaving RHOA in a form accessible to activation by ARHGEF2. Interacts with PIP4P1. In terms of processing, N-terminal myristoylation and palmitoylation mediates its recruitment to lysosome membranes, thereby promoting localization of the Ragulator complex to lysosomes. N-myristoylation by NMT1 is required for palmitoylation at Cys-3 and Cys-4. Post-translationally, ubiquitinated at Lys-60, Lys-103 and Lys-104 by UBE3A in neurons, promoting its degradation by the proteasome, thereby limiting mTORC1 signaling and activity-dependent synaptic remodeling. Ubiquitination at Lys-20 impairs the association with the lysosomal V-ATPase complex. Deubiquitination at Lys-20 by USP32 promotes the association with the lysosomal V-ATPase complex and subsequent activation of the mTORC1 complex.

The protein resides in the lysosome membrane. The protein localises to the late endosome membrane. Functionally, key component of the Ragulator complex, a multiprotein complex involved in amino acid sensing and activation of mTORC1, a signaling complex promoting cell growth in response to growth factors, energy levels, and amino acids. Activated by amino acids through a mechanism involving the lysosomal V-ATPase, the Ragulator plays a dual role for the small GTPases Rag (RagA/RRAGA, RagB/RRAGB, RagC/RRAGC and/or RagD/RRAGD): it (1) acts as a guanine nucleotide exchange factor (GEF), activating the small GTPases Rag and (2) mediates recruitment of Rag GTPases to the lysosome membrane. Activated Ragulator and Rag GTPases function as a scaffold recruiting mTORC1 to lysosomes where it is in turn activated. LAMTOR1 is directly responsible for anchoring the Ragulator complex to the lysosomal membrane. LAMTOR1 wraps around the other subunits of the Ragulator complex to hold them in place and interacts with the Rag GTPases, thereby playing a key role in the recruitment of the mTORC1 complex to lysosomes. Also involved in the control of embryonic stem cells differentiation via non-canonical RagC/RRAGC and RagD/RRAGD activation: together with FLCN, it is necessary to recruit and activate RagC/RRAGC and RagD/RRAGD at the lysosomes, and to induce exit of embryonic stem cells from pluripotency via non-canonical, mTOR-independent TFE3 inactivation. Also required for late endosomes/lysosomes biogenesis it may regulate both the recycling of receptors through endosomes and the MAPK signaling pathway through recruitment of some of its components to late endosomes. May be involved in cholesterol homeostasis regulating LDL uptake and cholesterol release from late endosomes/lysosomes. May also play a role in RHOA activation. The sequence is that of Ragulator complex protein LAMTOR1 from Mus musculus (Mouse).